The primary structure comprises 1416 residues: 1-phosphatidylinositol 4,5-bisphosphate phosphodiesterase eta-2 (1416 aa).

The necessary for plasma membrane localization stretch occupies residues 1–155; the sequence is MSGPWPSPDS…WVTGLRYLMA (155 aa). The PH domain occupies 47 to 155; the sequence is GAMQEGMQMV…WVTGLRYLMA (109 aa). 2 consecutive EF-hand domains span residues 169-204 and 205-241; these read TRDQ…LNVN and LPRQ…MSTR. Ca(2+) is bound by residues D182, N184, D186, S188, and E193. The PI-PLC X-box domain maps to 326–471; that stretch reads QDMTQPLSHY…LKGKILVKGK (146 aa). H341 is an active-site residue. Ca(2+) is bound by residues N342, E371, and D373. The active site involves H385. Ca(2+) is bound at residue E420. Positions 469 and 471 each coordinate substrate. Phosphoserine occurs at positions 487 and 491. A disordered region spans residues 535–620; that stretch reads DPNNFSVSTL…RGATRQKKTM (86 aa). Over residues 537-546 the composition is skewed to polar residues; it reads NNFSVSTLSP. Over residues 581–592 the composition is skewed to basic residues; it reads SRRKKKGSKLKK. Phosphoserine is present on residues S595 and S605. In terms of domain architecture, PI-PLC Y-box spans 626-740; that stretch reads LSDLVKYTKS…GYVLKPGCMC (115 aa). 2 residues coordinate substrate: S653 and R680. The region spanning 740–869 is the C2 domain; sequence CQGVFNPNSE…PGYRHVYLEG (130 aa). Ca(2+) is bound by residues I784, D786, D810, D839, H840, and D841. 3 disordered regions span residues 905 to 1109, 1121 to 1222, and 1315 to 1405; these read GSLD…GGWR, YSDA…LQPR, and ITSP…GPAS. Over residues 1011-1021 the composition is skewed to pro residues; sequence APGPGPPPPAA. Residues 1073–1083 are compositionally biased toward polar residues; sequence GSQTDGRSQPR. Over residues 1143–1166 the composition is skewed to low complexity; it reads VSSSSSMSSSDTVIDLSLPSLGLG. Residues 1199 to 1208 are compositionally biased toward polar residues; it reads KSKSNPNLRA. A compositionally biased stretch (gly residues) spans 1324–1333; the sequence is AGEGVAGGPG.

It depends on Ca(2+) as a cofactor. As to expression, expressed in retina and kidney.

It localises to the cytoplasm. The protein localises to the cell membrane. The enzyme catalyses a 1,2-diacyl-sn-glycero-3-phospho-(1D-myo-inositol-4,5-bisphosphate) + H2O = 1D-myo-inositol 1,4,5-trisphosphate + a 1,2-diacyl-sn-glycerol + H(+). Activity is stimulated by GNB1:GNG2. Functionally, the production of the second messenger molecules diacylglycerol (DAG) and inositol 1,4,5-trisphosphate (IP3) is mediated by activated phosphatidylinositol-specific phospholipase C enzymes. This phospholipase activity is very sensitive to calcium. May be important for formation and maintenance of the neuronal network in the postnatal brain. This is 1-phosphatidylinositol 4,5-bisphosphate phosphodiesterase eta-2 from Homo sapiens (Human).